The primary structure comprises 1681 residues: Meiosis regulator and mRNA stability factor 1 (1681 aa).

The 138-residue stretch at 340–477 (IGVFWDIENC…ALLHHAHELI (138 aa)) folds into the NYN domain. 2 disordered regions span residues 576–595 (VNETKNSCVSNEKAKSPKKV) and 638–717 (QMQS…DVVF). The span at 638 to 647 (QMQSKSNKTS) shows a compositional bias: polar residues. The span at 648-658 (QQEKDKKRNGD) shows a compositional bias: basic and acidic residues. A compositionally biased stretch (polar residues) spans 659–690 (KQGTLSQSSPLCTNQMLQTARNVGTDNTASKS). Basic and acidic residues predominate over residues 692 to 715 (QKRDDTTRKSNADSQKEQKNKEDV). The RRM domain occupies 779-858 (ADIQIGNLDY…KRIQVSLATG (80 aa)). HTH OST-type domains lie at 863 to 937 (SLSL…SPMG), 991 to 1067 (SLKT…HNKP), 1087 to 1161 (QLIQ…LTHR), 1163 to 1238 (QVKR…IPKR), 1247 to 1321 (RTKQ…LTEM), 1323 to 1398 (RIKA…INRK), 1399 to 1472 (SLRS…SVQL), and 1474 to 1548 (SLYV…LKND). Residues 1637–1648 (EPSTQNICPQES) show a composition bias toward polar residues. The segment at 1637-1662 (EPSTQNICPQESKSTKELPESPVKRQ) is disordered. Basic and acidic residues predominate over residues 1649 to 1659 (KSTKELPESPV).

Its subcellular location is the peroxisome. Its function is as follows. Essential regulator of oogenesis required for female meiotic progression to repress transposable elements and preventing their mobilization, which is essential for the germline integrity. In Xenopus tropicalis (Western clawed frog), this protein is Meiosis regulator and mRNA stability factor 1.